A 304-amino-acid polypeptide reads, in one-letter code: L-lactate dehydrogenase (304 aa).

Residues Val-11, Asp-32, Arg-37, and 76–77 (GA) each bind NAD(+). Substrate contacts are provided by residues Gln-79, Arg-85, and 117 to 120 (NPVD). Ser-138 lines the NAD(+) pocket. A substrate-binding site is contributed by 143 to 146 (DSAR). Beta-D-fructose 1,6-bisphosphate-binding residues include Arg-148 and His-163. His-170 functions as the Proton acceptor in the catalytic mechanism. Thr-225 lines the substrate pocket.

It belongs to the LDH/MDH superfamily. LDH family. In terms of assembly, homotetramer.

It is found in the cytoplasm. It catalyses the reaction (S)-lactate + NAD(+) = pyruvate + NADH + H(+). Its pathway is fermentation; pyruvate fermentation to lactate; (S)-lactate from pyruvate: step 1/1. With respect to regulation, allosterically activated by fructose 1,6-bisphosphate (FBP). Its function is as follows. Catalyzes the conversion of lactate to pyruvate. This Deinococcus radiodurans (strain ATCC 13939 / DSM 20539 / JCM 16871 / CCUG 27074 / LMG 4051 / NBRC 15346 / NCIMB 9279 / VKM B-1422 / R1) protein is L-lactate dehydrogenase.